The following is a 1181-amino-acid chain: Integrin alpha-2 (1181 aa).

The N-terminal stretch at 1 to 29 is a signal peptide; it reads MGPERTGAAPLPLLLVLALSQGILNCCLA. Over 30 to 1132 the chain is Extracellular; it reads YNVGLPEAKI…KPDEKAEVPT (1103 aa). FG-GAP repeat units follow at residues 34–92 and 101–161; these read LPEA…TATC and TSIP…LSAS. Cysteine 83 and cysteine 92 are joined by a disulfide. 3 N-linked (GlcNAc...) asparagine glycosylation sites follow: asparagine 105, asparagine 112, and asparagine 343. Positions 188–365 constitute a VWFA domain; it reads WDAVKNFLEK…TLGEQIFSIE (178 aa). FG-GAP repeat units follow at residues 366 to 420, 423 to 475, 477 to 539, 540 to 598, and 602 to 664; these read GTVQ…LIFP, AFDQ…ENGN, TVIQ…ILGQ, HQFL…TIRT, and QKIL…FTPE. Asparagine 432, asparagine 460, and asparagine 475 each carry an N-linked (GlcNAc...) asparagine glycan. Ca(2+) contacts are provided by aspartate 499, aspartate 501, aspartate 503, aspartate 507, aspartate 563, asparagine 565, aspartate 567, aspartate 571, aspartate 627, asparagine 629, aspartate 631, and aspartate 635. Intrachain disulfides connect cysteine 680/cysteine 737, cysteine 789/cysteine 795, cysteine 865/cysteine 876, cysteine 1019/cysteine 1050, and cysteine 1055/cysteine 1060. Asparagine 699 is a glycosylation site (N-linked (GlcNAc...) asparagine). N-linked (GlcNAc...) asparagine glycosylation is found at asparagine 1057, asparagine 1074, and asparagine 1081. A helical transmembrane segment spans residues 1133-1154; sequence GVIIGSIIAGILLLLALVAILW. The segment at 1155–1161 is interaction with HPS5; that stretch reads KLGFFKR. The Cytoplasmic segment spans residues 1155–1181; that stretch reads KLGFFKRKYEKMTKNPDEIDETTELSS. The GFFKR motif signature appears at 1157 to 1161; sequence GFFKR.

It belongs to the integrin alpha chain family. As to quaternary structure, heterodimer of an alpha and a beta subunit. Alpha-2 associates with beta-1. Interacts with HPS5 and RAB21. In terms of assembly, (Microbial infection) Integrin ITGA2:ITGB1 interacts (via ITAG2 I-domain) with rotavirus A VP4 protein. (Microbial infection) Integrin ITGA2:ITGB1 interacts with human echoviruses 1 and 8 capsid proteins.

It localises to the membrane. Integrin alpha-2/beta-1 is a receptor for laminin, collagen, collagen C-propeptides, fibronectin and E-cadherin. It recognizes the proline-hydroxylated sequence G-F-P-G-E-R in collagen. It is responsible for adhesion of platelets and other cells to collagens, modulation of collagen and collagenase gene expression, force generation and organization of newly synthesized extracellular matrix. Functionally, (Microbial infection) Integrin ITGA2:ITGB1 acts as a receptor for Human rotavirus A. In terms of biological role, (Microbial infection) Integrin ITGA2:ITGB1 acts as a receptor for Human echoviruses 1 and 8. The polypeptide is Integrin alpha-2 (ITGA2) (Homo sapiens (Human)).